The sequence spans 111 residues: Iron-sulfur cluster assembly protein CyaY (111 aa).

The protein belongs to the frataxin family.

In terms of biological role, involved in iron-sulfur (Fe-S) cluster assembly. May act as a regulator of Fe-S biogenesis. In Cupriavidus taiwanensis (strain DSM 17343 / BCRC 17206 / CCUG 44338 / CIP 107171 / LMG 19424 / R1) (Ralstonia taiwanensis (strain LMG 19424)), this protein is Iron-sulfur cluster assembly protein CyaY.